Here is a 207-residue protein sequence, read N- to C-terminus: NADH-quinone oxidoreductase subunit C (207 aa).

Belongs to the complex I 30 kDa subunit family. NDH-1 is composed of 14 different subunits. Subunits NuoB, C, D, E, F, and G constitute the peripheral sector of the complex.

It is found in the cell inner membrane. It carries out the reaction a quinone + NADH + 5 H(+)(in) = a quinol + NAD(+) + 4 H(+)(out). NDH-1 shuttles electrons from NADH, via FMN and iron-sulfur (Fe-S) centers, to quinones in the respiratory chain. The immediate electron acceptor for the enzyme in this species is believed to be ubiquinone. Couples the redox reaction to proton translocation (for every two electrons transferred, four hydrogen ions are translocated across the cytoplasmic membrane), and thus conserves the redox energy in a proton gradient. This Thermus thermophilus (strain ATCC BAA-163 / DSM 7039 / HB27) protein is NADH-quinone oxidoreductase subunit C.